The chain runs to 425 residues: MTRKHILSFALMTALGMTVTSTAFAQLHLEIAKAPEQAPKIAIVPFGNDQSIFPIVENDLNRSGRFSSASKNLPTTASIDAIQASAWQAAGIPYVVVGNLKPAANNAFEVHYQLYDVQKQQYLLNEVLTVPASRVRQAAHMISDAIYQALTGIAGDFSGRIAYVLRNPATPDQRYTLQIADTDGEQPKTVLSSRDPILSPAWTPDAKKIAYVSFETKRPAIYLQDLATGQREVLASFKGLNGAPSFSPDGKSMLFTASMNGNPEIYQMDLSTRQLQRMTNDNAIDTEARYAPDGKSFIFTSDRGGSPQIYRYSFDDSSTKRLTFRGAFNARGTLSADGKNIALVHRPSGSNYKVAIMNISTGIVNILTPTSLDESPSFSPNGQMVVYATYEGSRGLLSIMSTDGRFRMNLPSEQGEVREPAWAPK.

Residues Met-1–Ala-25 form the signal peptide.

The protein belongs to the TolB family. The Tol-Pal system is composed of five core proteins: the inner membrane proteins TolA, TolQ and TolR, the periplasmic protein TolB and the outer membrane protein Pal. They form a network linking the inner and outer membranes and the peptidoglycan layer.

It is found in the periplasm. In terms of biological role, part of the Tol-Pal system, which plays a role in outer membrane invagination during cell division and is important for maintaining outer membrane integrity. This Acinetobacter baylyi (strain ATCC 33305 / BD413 / ADP1) protein is Tol-Pal system protein TolB.